Reading from the N-terminus, the 217-residue chain is 3,4-dihydroxy-2-butanone 4-phosphate synthase (217 aa).

Residues 37–38 (RE), Asp42, 150–154 (RGGHT), and Glu174 each bind D-ribulose 5-phosphate. Glu38 provides a ligand contact to Mg(2+). Residue His153 coordinates Mg(2+).

This sequence belongs to the DHBP synthase family. As to quaternary structure, homodimer. Mg(2+) is required as a cofactor. Requires Mn(2+) as cofactor.

The catalysed reaction is D-ribulose 5-phosphate = (2S)-2-hydroxy-3-oxobutyl phosphate + formate + H(+). The protein operates within cofactor biosynthesis; riboflavin biosynthesis; 2-hydroxy-3-oxobutyl phosphate from D-ribulose 5-phosphate: step 1/1. Functionally, catalyzes the conversion of D-ribulose 5-phosphate to formate and 3,4-dihydroxy-2-butanone 4-phosphate. In Salmonella heidelberg (strain SL476), this protein is 3,4-dihydroxy-2-butanone 4-phosphate synthase.